Consider the following 468-residue polypeptide: Serine--tRNA ligase (468 aa).

L-serine is bound at residue 272 to 274 (TAE). ATP is bound at residue 303 to 305 (RAE). An L-serine-binding site is contributed by Glu326. Residue 390-393 (EISS) coordinates ATP. Ser426 contacts L-serine.

It belongs to the class-II aminoacyl-tRNA synthetase family. Type-1 seryl-tRNA synthetase subfamily. As to quaternary structure, homodimer. The tRNA molecule binds across the dimer.

The protein localises to the cytoplasm. The catalysed reaction is tRNA(Ser) + L-serine + ATP = L-seryl-tRNA(Ser) + AMP + diphosphate + H(+). It catalyses the reaction tRNA(Sec) + L-serine + ATP = L-seryl-tRNA(Sec) + AMP + diphosphate + H(+). The protein operates within aminoacyl-tRNA biosynthesis; selenocysteinyl-tRNA(Sec) biosynthesis; L-seryl-tRNA(Sec) from L-serine and tRNA(Sec): step 1/1. Catalyzes the attachment of serine to tRNA(Ser). Is also able to aminoacylate tRNA(Sec) with serine, to form the misacylated tRNA L-seryl-tRNA(Sec), which will be further converted into selenocysteinyl-tRNA(Sec). This Xanthobacter autotrophicus (strain ATCC BAA-1158 / Py2) protein is Serine--tRNA ligase.